The following is a 402-amino-acid chain: Acetyl-CoA acetyltransferase (402 aa).

The active-site Acyl-thioester intermediate is cysteine 90. CoA contacts are provided by tyrosine 185 and lysine 230. Tyrosine 185 serves as a coordination point for K(+). Alanine 250 is a K(+) binding site. Serine 251 contributes to the CoA binding site. Valine 348 is a binding site for K(+). Catalysis depends on proton acceptor residues histidine 352 and cysteine 382.

It belongs to the thiolase-like superfamily. Thiolase family. Homotetramer.

The protein resides in the cytoplasm. It is found in the cytosol. The enzyme catalyses 2 acetyl-CoA = acetoacetyl-CoA + CoA. Its pathway is metabolic intermediate biosynthesis; (R)-mevalonate biosynthesis; (R)-mevalonate from acetyl-CoA: step 1/3. Its function is as follows. Acetyl-CoA acetyltransferase; part of the first module of ergosterol biosynthesis pathway that includes the early steps of the pathway, conserved across all eukaryotes, and which results in the formation of mevalonate from acetyl-coenzyme A (acetyl-CoA). ERG10 catalyzes the formation of acetoacetyl-CoA from acetyl-CoA. The first module starts with the action of the cytosolic acetyl-CoA acetyltransferase ERG10 that catalyzes the formation of acetoacetyl-CoA. The hydroxymethylglutaryl-CoA synthase ERG13 then condenses acetyl-CoA with acetoacetyl-CoA to form HMG-CoA. The 3-hydroxy-3-methylglutaryl-coenzyme A (HMG-CoA) reductase HMG1 finally reduces HMG-CoA to produce mevalonate. The sequence is that of Acetyl-CoA acetyltransferase from Candida albicans (strain SC5314 / ATCC MYA-2876) (Yeast).